The primary structure comprises 111 residues: Nucleoid-associated protein Cpar_0834 (111 aa).

It belongs to the YbaB/EbfC family. As to quaternary structure, homodimer.

It is found in the cytoplasm. Its subcellular location is the nucleoid. In terms of biological role, binds to DNA and alters its conformation. May be involved in regulation of gene expression, nucleoid organization and DNA protection. This chain is Nucleoid-associated protein Cpar_0834, found in Chlorobaculum parvum (strain DSM 263 / NCIMB 8327) (Chlorobium vibrioforme subsp. thiosulfatophilum).